The following is a 191-amino-acid chain: Protein hugin (191 aa).

The signal sequence occupies residues methionine 1–alanine 24. A propeptide spanning residues lysine 25 to leucine 119 is cleaved from the precursor. Residues leucine 137 and leucine 181 each carry the leucine amide modification. A propeptide spanning residues alanine 185–aspartate 191 is cleaved from the precursor.

This sequence belongs to the pyrokinin family. Expressed in a subgroup of neurosecretory cells in the subesophageal ganglion from embryonic stage 9 to larval stages.

It is found in the secreted. Functionally, probably has a role in larval molting. The chain is Protein hugin (Hug) from Drosophila melanogaster (Fruit fly).